Consider the following 168-residue polypeptide: SPbeta prophage-derived uncharacterized protein YonX (168 aa).

The stretch at Met1–Asn53 forms a coiled coil.

In Bacillus subtilis (strain 168), this protein is SPbeta prophage-derived uncharacterized protein YonX (yonX).